We begin with the raw amino-acid sequence, 184 residues long: ATP synthase subunit b, chloroplastic (184 aa).

The helical transmembrane segment at 27 to 49 threads the bilayer; it reads LATNPINLSVVFGVLIFFGKGVL.

This sequence belongs to the ATPase B chain family. F-type ATPases have 2 components, F(1) - the catalytic core - and F(0) - the membrane proton channel. F(1) has five subunits: alpha(3), beta(3), gamma(1), delta(1), epsilon(1). F(0) has four main subunits: a(1), b(1), b'(1) and c(10-14). The alpha and beta chains form an alternating ring which encloses part of the gamma chain. F(1) is attached to F(0) by a central stalk formed by the gamma and epsilon chains, while a peripheral stalk is formed by the delta, b and b' chains.

The protein localises to the plastid. It is found in the chloroplast thylakoid membrane. Its function is as follows. F(1)F(0) ATP synthase produces ATP from ADP in the presence of a proton or sodium gradient. F-type ATPases consist of two structural domains, F(1) containing the extramembraneous catalytic core and F(0) containing the membrane proton channel, linked together by a central stalk and a peripheral stalk. During catalysis, ATP synthesis in the catalytic domain of F(1) is coupled via a rotary mechanism of the central stalk subunits to proton translocation. Functionally, component of the F(0) channel, it forms part of the peripheral stalk, linking F(1) to F(0). In Arabis hirsuta (Hairy rock-cress), this protein is ATP synthase subunit b, chloroplastic.